The chain runs to 276 residues: Aspartate dehydrogenase domain-containing protein (276 aa).

Belongs to the L-aspartate dehydrogenase family.

The sequence is that of Aspartate dehydrogenase domain-containing protein (aspdh) from Danio rerio (Zebrafish).